Reading from the N-terminus, the 621-residue chain is Glutathione-regulated potassium-efflux system protein KefC (621 aa).

A run of 12 helical transmembrane segments spans residues 9 to 29 (ALIY…LGLG), 30 to 50 (SVLG…RLVN), 54 to 74 (AILH…GLEL), 90 to 110 (GALQ…LLGL), 114 to 134 (VAEL…MQAM), 149 to 169 (FAVL…IPLL), 178 to 198 (LMAF…VVVL), 232 to 252 (LLLE…GVLL), 270 to 290 (GLLL…APWS), 296 to 316 (IVIL…LIAQ), 326 to 346 (RWFA…FGPA), and 359 to 379 (ALTL…VLLT). In terms of domain architecture, RCK N-terminal spans 399-518 (QPRVIVAGFG…AGVEAPERET (120 aa)). The disordered stretch occupies residues 598–621 (GWQGTEEGRHTGDIADEPENKPSA).

This sequence belongs to the monovalent cation:proton antiporter 2 (CPA2) transporter (TC 2.A.37) family. KefC subfamily. As to quaternary structure, homodimer. Interacts with the regulatory subunit KefF.

The protein localises to the cell inner membrane. Pore-forming subunit of a potassium efflux system that confers protection against electrophiles. Catalyzes K(+)/H(+) antiport. This chain is Glutathione-regulated potassium-efflux system protein KefC, found in Klebsiella aerogenes (Enterobacter aerogenes).